Consider the following 289-residue polypeptide: Bifunctional protein FolD (289 aa).

NADP(+)-binding positions include 165 to 167 (GAS) and S190.

It belongs to the tetrahydrofolate dehydrogenase/cyclohydrolase family. In terms of assembly, homodimer.

The enzyme catalyses (6R)-5,10-methylene-5,6,7,8-tetrahydrofolate + NADP(+) = (6R)-5,10-methenyltetrahydrofolate + NADPH. It catalyses the reaction (6R)-5,10-methenyltetrahydrofolate + H2O = (6R)-10-formyltetrahydrofolate + H(+). Its pathway is one-carbon metabolism; tetrahydrofolate interconversion. Functionally, catalyzes the oxidation of 5,10-methylenetetrahydrofolate to 5,10-methenyltetrahydrofolate and then the hydrolysis of 5,10-methenyltetrahydrofolate to 10-formyltetrahydrofolate. This is Bifunctional protein FolD from Ralstonia pickettii (strain 12J).